Consider the following 161-residue polypeptide: Phosphopantetheine adenylyltransferase (161 aa).

S9 is a binding site for substrate. ATP-binding positions include 9 to 10 (SF) and H17. Residues K41, T73, and R87 each contribute to the substrate site. ATP-binding positions include 88 to 90 (GIR), E98, and 123 to 129 (YQYVSSS).

The protein belongs to the bacterial CoaD family. Homohexamer. It depends on Mg(2+) as a cofactor.

It localises to the cytoplasm. The catalysed reaction is (R)-4'-phosphopantetheine + ATP + H(+) = 3'-dephospho-CoA + diphosphate. The protein operates within cofactor biosynthesis; coenzyme A biosynthesis; CoA from (R)-pantothenate: step 4/5. Reversibly transfers an adenylyl group from ATP to 4'-phosphopantetheine, yielding dephospho-CoA (dPCoA) and pyrophosphate. This is Phosphopantetheine adenylyltransferase from Levilactobacillus brevis (strain ATCC 367 / BCRC 12310 / CIP 105137 / JCM 1170 / LMG 11437 / NCIMB 947 / NCTC 947) (Lactobacillus brevis).